A 1059-amino-acid polypeptide reads, in one-letter code: Carbamoyl phosphate synthase large chain (1059 aa).

A carboxyphosphate synthetic domain region spans residues M1–E401. Positions 129, 169, 175, 176, 208, 210, 215, 241, 242, 243, 284, and 298 each coordinate ATP. The ATP-grasp 1 domain maps to K133–V327. Residues Q284, E298, and N300 each contribute to the Mg(2+) site. Residues Q284, E298, and N300 each coordinate Mn(2+). Positions I402–S546 are oligomerization domain. Residues I547–Y929 are carbamoyl phosphate synthetic domain. An ATP-grasp 2 domain is found at E671–L861. Residues R707, S746, L748, E752, G777, V778, H779, S780, Q820, and E832 each coordinate ATP. Residues Q820, E832, and N834 each contribute to the Mg(2+) site. Positions 820, 832, and 834 each coordinate Mn(2+). The region spanning F930–I1059 is the MGS-like domain. The segment at F930–I1059 is allosteric domain.

It belongs to the CarB family. As to quaternary structure, composed of two chains; the small (or glutamine) chain promotes the hydrolysis of glutamine to ammonia, which is used by the large (or ammonia) chain to synthesize carbamoyl phosphate. Tetramer of heterodimers (alpha,beta)4. It depends on Mg(2+) as a cofactor. Mn(2+) is required as a cofactor.

It catalyses the reaction hydrogencarbonate + L-glutamine + 2 ATP + H2O = carbamoyl phosphate + L-glutamate + 2 ADP + phosphate + 2 H(+). It carries out the reaction hydrogencarbonate + NH4(+) + 2 ATP = carbamoyl phosphate + 2 ADP + phosphate + 2 H(+). The protein operates within amino-acid biosynthesis; L-arginine biosynthesis; carbamoyl phosphate from bicarbonate: step 1/1. It functions in the pathway pyrimidine metabolism; UMP biosynthesis via de novo pathway; (S)-dihydroorotate from bicarbonate: step 1/3. Functionally, large subunit of the glutamine-dependent carbamoyl phosphate synthetase (CPSase). CPSase catalyzes the formation of carbamoyl phosphate from the ammonia moiety of glutamine, carbonate, and phosphate donated by ATP, constituting the first step of 2 biosynthetic pathways, one leading to arginine and/or urea and the other to pyrimidine nucleotides. The large subunit (synthetase) binds the substrates ammonia (free or transferred from glutamine from the small subunit), hydrogencarbonate and ATP and carries out an ATP-coupled ligase reaction, activating hydrogencarbonate by forming carboxy phosphate which reacts with ammonia to form carbamoyl phosphate. The polypeptide is Carbamoyl phosphate synthase large chain (Streptococcus mutans serotype c (strain ATCC 700610 / UA159)).